The chain runs to 104 residues: MSYAIFKHGGKQYKVVEGDIVLLDKMNKEPKALVELVEVLAVSKEGKLSFGKPFVNGAKIEAEVINEGRGKKVITFKKRRRKDSKTKRGFRRDFTRVRITKIVA.

It belongs to the bacterial ribosomal protein bL21 family. In terms of assembly, part of the 50S ribosomal subunit. Contacts protein L20.

Functionally, this protein binds to 23S rRNA in the presence of protein L20. In Helicobacter pylori (strain P12), this protein is Large ribosomal subunit protein bL21.